We begin with the raw amino-acid sequence, 564 residues long: Protein NRT1/ PTR FAMILY 5.16 (564 aa).

Transmembrane regions (helical) follow at residues 49 to 69 and 80 to 100; these read FAYF…LGQS and WSGT…AYLG. T104 carries the phosphothreonine modification. 10 consecutive transmembrane segments (helical) span residues 110 to 130, 145 to 165, 192 to 212, 220 to 240, 327 to 347, 358 to 378, 408 to 428, 450 to 470, 486 to 506, and 533 to 553; these read LIYI…LMGL, FFWV…GQGG, FFNW…IVVV, WALG…LFLF, IPIW…ATFF, ILPG…LSIF, IGAG…VEMK, IWWF…SLVG, IGLA…GFLI, and YFYW…LLLS.

Belongs to the major facilitator superfamily. Proton-dependent oligopeptide transporter (POT/PTR) (TC 2.A.17) family. As to expression, expressed in shoots and roots.

The protein localises to the membrane. In Arabidopsis thaliana (Mouse-ear cress), this protein is Protein NRT1/ PTR FAMILY 5.16 (NPF5.16).